We begin with the raw amino-acid sequence, 165 residues long: Anaphase-promoting complex subunit 11 (165 aa).

Residues 52-95 form an RING-type; atypical zinc finger; sequence CPSCKFPGDQCPLVIGLCHHNFHDHCIYRWLDTPTSKGLCPMCR.

As to quaternary structure, the APC/C is composed of at least 13 subunits that stay tightly associated throughout the cell cycle: APC1, APC2, APC4, APC5, APC9, APC11, CDC16, CDC23, CDC26, CDC27, DOC1, MND2 and SWM1.

Its pathway is protein modification; protein ubiquitination. In terms of biological role, probably catalytic subunit of the anaphase promoting complex/cyclosome (APC/C), a cell cycle-regulated E3 ubiquitin-protein ligase complex that controls progression through mitosis and the G1 phase of the cell cycle. The APC/C is thought to confer substrate specificity and, in the presence of ubiquitin-conjugating E2 enzymes, it catalyzes the formation of protein-ubiquitin conjugates that are subsequently degraded by the 26S proteasome. In early mitosis, the APC/C is activated by CDC20 and targets securin PDS1, the B-type cyclin CLB5, and other anaphase inhibitory proteins for proteolysis, thereby triggering the separation of sister chromatids at the metaphase-to-anaphase transition. In late mitosis and in G1, degradation of CLB5 allows activation of the APC/C by CDH1, which is needed to destroy CDC20 and the B-type cyclin CLB2 to allow exit from mitosis and creating the low CDK state necessary for cytokinesis and for reforming prereplicative complexes in G1 prior to another round of replication. APC11 is required to recruit the ubiquitin-conjugating enzyme E2 to the APC/C. The chain is Anaphase-promoting complex subunit 11 (APC11) from Saccharomyces cerevisiae (strain ATCC 204508 / S288c) (Baker's yeast).